An 834-amino-acid polypeptide reads, in one-letter code: DNA polymerase I, thermostable (834 aa).

The 5'-3' exonuclease domain occupies 176 to 262; the sequence is RPEQWVDFRA…DLPLEVDLAQ (87 aa). The polymerase stretch occupies residues 412-834; sequence ERLHRNLLKR…MGEDWLSAKG (423 aa).

This sequence belongs to the DNA polymerase type-A family.

The catalysed reaction is DNA(n) + a 2'-deoxyribonucleoside 5'-triphosphate = DNA(n+1) + diphosphate. Functionally, in addition to polymerase activity, this DNA polymerase exhibits 5'-3' exonuclease activity. This is DNA polymerase I, thermostable (polA) from Thermus thermophilus (strain ATCC 27634 / DSM 579 / HB8).